The sequence spans 261 residues: MSRIADTFARLRAAGRTALMPYLMTGYPERDSVLDLAPALEDAGADLFELGVPFSDPLADGATIQRASERALANGVRLEHCIATIAVLRERGVRAPIVPMGYYNPFLQYGLARLARDMAAAGADGLIIPDLPPEEAQECHAACREYGLDLIFFVAPTTPDERIARITALASGFIYCVSLTGVTGARRELWSGLPAFLERVRRHTTLPLVVGFGISSADHVREVGRHAAGAIVASALINVIEQSHPGEYVARAAEFVRLLRG.

Catalysis depends on proton acceptor residues E49 and D60.

The protein belongs to the TrpA family. As to quaternary structure, tetramer of two alpha and two beta chains.

The catalysed reaction is (1S,2R)-1-C-(indol-3-yl)glycerol 3-phosphate + L-serine = D-glyceraldehyde 3-phosphate + L-tryptophan + H2O. It participates in amino-acid biosynthesis; L-tryptophan biosynthesis; L-tryptophan from chorismate: step 5/5. Its function is as follows. The alpha subunit is responsible for the aldol cleavage of indoleglycerol phosphate to indole and glyceraldehyde 3-phosphate. The protein is Tryptophan synthase alpha chain of Roseiflexus castenholzii (strain DSM 13941 / HLO8).